A 302-amino-acid chain; its full sequence is Putative fructose-bisphosphate aldolase (302 aa).

Asp86 acts as the Proton donor in catalysis. Residues His87, Asp116, Glu146, and His192 each contribute to the Zn(2+) site. Gly193 is a dihydroxyacetone phosphate binding site. His223 contributes to the Zn(2+) binding site. Residues 224-226 (GAD) and 245-248 (NVNR) each bind dihydroxyacetone phosphate.

Belongs to the class II fructose-bisphosphate aldolase family. Homodimer. Zn(2+) is required as a cofactor.

The catalysed reaction is beta-D-fructose 1,6-bisphosphate = D-glyceraldehyde 3-phosphate + dihydroxyacetone phosphate. It functions in the pathway carbohydrate degradation; glycolysis; D-glyceraldehyde 3-phosphate and glycerone phosphate from D-glucose: step 4/4. Catalyzes the aldol condensation of dihydroxyacetone phosphate (DHAP or glycerone-phosphate) with glyceraldehyde 3-phosphate (G3P) to form fructose 1,6-bisphosphate (FBP) in gluconeogenesis and the reverse reaction in glycolysis. In Coccidioides immitis (strain RS) (Valley fever fungus), this protein is Putative fructose-bisphosphate aldolase.